The chain runs to 274 residues: Thiamine kinase (274 aa).

It belongs to the thiamine kinase family.

It catalyses the reaction thiamine + ATP = thiamine phosphate + ADP + H(+). It functions in the pathway cofactor biosynthesis; thiamine diphosphate biosynthesis; thiamine phosphate from thiamine: step 1/1. Catalyzes the ATP-dependent phosphorylation of thiamine to thiamine phosphate. Is involved in thiamine salvage. This Salmonella typhimurium (strain LT2 / SGSC1412 / ATCC 700720) protein is Thiamine kinase.